The sequence spans 228 residues: Orotidine 5'-phosphate decarboxylase (228 aa).

Substrate contacts are provided by residues D11, K33, 60 to 69, T117, R178, Q186, G206, and R207; that span reads DLKLHDIPNT. Catalysis depends on K62, which acts as the Proton donor.

It belongs to the OMP decarboxylase family. Type 1 subfamily. Homodimer.

It catalyses the reaction orotidine 5'-phosphate + H(+) = UMP + CO2. The protein operates within pyrimidine metabolism; UMP biosynthesis via de novo pathway; UMP from orotate: step 2/2. Catalyzes the decarboxylation of orotidine 5'-monophosphate (OMP) to uridine 5'-monophosphate (UMP). The protein is Orotidine 5'-phosphate decarboxylase of Ehrlichia canis (strain Jake).